Here is a 422-residue protein sequence, read N- to C-terminus: N-acylglucosamine 2-epimerase (422 aa).

A leucine-zipper region spans residues 185-206 (LLNLVEQLGEADEELAGISAEL).

It belongs to the N-acylglucosamine 2-epimerase family. As to quaternary structure, homodimer. Forms a heterodimer with renin and inhibits its activity.

It carries out the reaction an N-acyl-D-glucosamine = an N-acyl-D-mannosamine. It participates in amino-sugar metabolism; N-acetylneuraminate degradation. Its function is as follows. Catalyzes the interconversion of N-acetylglucosamine to N-acetylmannosamine. Involved in the N-glycolylneuraminic acid (Neu5Gc) degradation pathway. The polypeptide is N-acylglucosamine 2-epimerase (RENBP) (Bos taurus (Bovine)).